The primary structure comprises 445 residues: Glutamate--tRNA ligase 1 (445 aa).

Positions 9 to 19 (PSPTGYLHVGN) match the 'HIGH' region motif. A 'KMSKS' region motif is present at residues 238 to 242 (KISKR). Residue K241 participates in ATP binding.

Belongs to the class-I aminoacyl-tRNA synthetase family. Glutamate--tRNA ligase type 1 subfamily. In terms of assembly, monomer.

Its subcellular location is the cytoplasm. The catalysed reaction is tRNA(Glu) + L-glutamate + ATP = L-glutamyl-tRNA(Glu) + AMP + diphosphate. Catalyzes the attachment of glutamate to tRNA(Glu) in a two-step reaction: glutamate is first activated by ATP to form Glu-AMP and then transferred to the acceptor end of tRNA(Glu). The chain is Glutamate--tRNA ligase 1 from Ehrlichia ruminantium (strain Gardel).